Reading from the N-terminus, the 348-residue chain is GMP reductase 2 (348 aa).

NADP(+)-binding positions include Ser-26–Arg-27, Lys-78, Asp-129–Ala-131, and Ile-180–Gly-181. Residues Gly-181, Gly-183, and Cys-186 each coordinate K(+). Catalysis depends on Cys-186, which acts as the Thioimidate intermediate. Thr-188 functions as the Proton donor/acceptor in the catalytic mechanism. A K(+)-binding site is contributed by Arg-189. GMP contacts are provided by residues Asp-219–Gly-221, Gly-242–Gly-243, Gly-268–Ser-270, and Arg-286–Gly-290. Residues Met-269 and Tyr-285–Arg-286 each bind NADP(+). N6-acetyllysine is present on Lys-291. Position 314-317 (Ser-314–Thr-317) interacts with NADP(+).

This sequence belongs to the IMPDH/GMPR family. GuaC type 1 subfamily. As to quaternary structure, homotetramer.

The catalysed reaction is IMP + NH4(+) + NADP(+) = GMP + NADPH + 2 H(+). Functionally, catalyzes the irreversible NADPH-dependent deamination of GMP to IMP. It functions in the conversion of nucleobase, nucleoside and nucleotide derivatives of G to A nucleotides, and in maintaining the intracellular balance of A and G nucleotides. Plays a role in modulating cellular differentiation. This chain is GMP reductase 2, found in Mus musculus (Mouse).